The following is a 131-amino-acid chain: Protein ApaG (131 aa).

Residues 3–127 (RAVTRQIEVT…FSLDSPDGGK (125 aa)) form the ApaG domain.

The protein is Protein ApaG of Bradyrhizobium sp. (strain BTAi1 / ATCC BAA-1182).